The sequence spans 338 residues: Phenylalanine--tRNA ligase alpha subunit (338 aa).

Glu252 is a binding site for Mg(2+).

Belongs to the class-II aminoacyl-tRNA synthetase family. Phe-tRNA synthetase alpha subunit type 1 subfamily. In terms of assembly, tetramer of two alpha and two beta subunits. Mg(2+) serves as cofactor.

The protein resides in the cytoplasm. It carries out the reaction tRNA(Phe) + L-phenylalanine + ATP = L-phenylalanyl-tRNA(Phe) + AMP + diphosphate + H(+). This chain is Phenylalanine--tRNA ligase alpha subunit, found in Pseudomonas entomophila (strain L48).